The following is a 908-amino-acid chain: Mycobactin import ATP-binding/permease protein IrtA (908 aa).

Over 1–329 (MARGFQGVML…SRLLAPLKKP (329 aa)) the chain is Cytoplasmic. The region spanning 15–124 (ARDHQATVVD…MGSRGFSVPE (110 aa)) is the FAD-binding FR-type domain. Residues 16-245 (RDHQATVVDK…AQAYWTEGRA (230 aa)) form a siderophore interaction domain region. FAD contacts are provided by residues 70 to 73 (RAYT), 87 to 91 (DMVLH), 97 to 98 (AS), and 241 to 243 (TEG). Residues 245 to 311 (AMGSSRGETS…GAAQPRTPVR (67 aa)) are disordered. Positions 253-309 (TSTPAKPAAKTAPAKAAAKPAAASGAGTPEHAAAPAAATTGAPQAAPAPGAAQPRTP) are enriched in low complexity. A helical transmembrane segment spans residues 330-350 (LIVSGVLQALITLIELAPFVL). Residues 331 to 613 (IVSGVLQALI…IGYGLSGIQT (283 aa)) enclose the ABC transmembrane type-1 domain. Topologically, residues 351–371 (LVELARLLLGGAEAERLWTLG) are periplasmic. The helical transmembrane segment at 372-392 (LTAVSLIGLGAVLAAAMTLWL) threads the bilayer. Residues 393 to 444 (HRVDARFAHELRGRLLTKLSRLPLGWFTRRGSASTKQLVQDDTLALHYLITH) lie on the Cytoplasmic side of the membrane. A helical transmembrane segment spans residues 445 to 465 (AIPDAVAAVVAPVAVLVYLFV). Residues 466–469 (ADWR) are Periplasmic-facing. Residues 470-490 (VALVLFIPVLVYLVLMSVMTI) form a helical membrane-spanning segment. Residues 491 to 557 (QSGSKIAQAP…PFVGKKTLMD (67 aa)) lie on the Cytoplasmic side of the membrane. The helical transmembrane segment at 558 to 578 (LVTRPATFLWIILVAGVPLVV) threads the bilayer. Residues 579 to 586 (TGRMDPVN) are Periplasmic-facing. Residues 587 to 607 (LLPFLLLGTTFGARLLGIGYG) traverse the membrane as a helical segment. Residues 608–908 (LSGIQTGMLA…VSADAVEVGR (301 aa)) lie on the Cytoplasmic side of the membrane. In terms of domain architecture, ABC transporter spans 654–887 (VELDRVSFEY…GGRYRGLWDS (234 aa)). Residue 687-694 (GPSGSGKS) coordinates ATP.

The protein belongs to the ABC transporter superfamily. Siderophore-Fe(3+) uptake transporter (SIUT) (TC 3.A.1.21) family. As to quaternary structure, forms a heterodimer with IrtB. It depends on FAD as a cofactor.

Its subcellular location is the cell inner membrane. The ATPase activity of IrtAB is stimulated more than 38-fold in the presence of Fe-MBT, and more than 10-fold in the presence of Fe-cMBT. Functionally, part of the ABC transporter complex IrtAB involved in the import of iron-bound mycobactin (Fe-MBT) and carboxymycobactin (Fe-cMBT). Has a preference for Fe-MBT over Fe-cMBT. Mycobactins are then reduced by the siderophore interaction domain to facilitate iron release in the bacterial cell. Transmembrane domains (TMD) form a pore in the membrane and the ATP-binding domain (NBD) is responsible for energy generation. In Mycolicibacterium thermoresistibile (strain ATCC 19527 / DSM 44167 / CIP 105390 / JCM 6362 / NCTC 10409 / 316) (Mycobacterium thermoresistibile), this protein is Mycobactin import ATP-binding/permease protein IrtA.